Here is a 458-residue protein sequence, read N- to C-terminus: MASTITGSQDCIVNHRGEVDGEPELDISPCQQWGEASSPISRNRDSVMTLQSGCFENIESETYLPLKVSSQIDTQDSSVKFCKNEPQDHQESRRLFVMEESTERKVIKGESCSENLQVKLVSDGQELASPLLNGEATCQNGQLKESLDPIDCNCKDIHGWKSQVVSCSQQRAHTEEKPCDHNNCGKILNTSPDGHPYEKIHTAEKQYECSQCGKNFSQSSELLLHQRDHTEEKPYKCEQCGKGFTRSSSLLIHQAVHTDEKPYKCDKCGKGFTRSSSLLIHHAVHTGEKPYKCDKCGKGFSQSSKLHIHQRVHTGEKPYECEECGMSFSQRSNLHIHQRVHTGERPYKCGECGKGFSQSSNLHIHRCIHTGEKPYQCYECGKGFSQSPDLRIHLRVHTGEKPYHCGKCGKGFSQSSKLLIHQRVHTGEKPYECSKCGKGFSQSSNLHIHQRVHKKDPR.

Residue lysine 108 forms a Glycyl lysine isopeptide (Lys-Gly) (interchain with G-Cter in SUMO2) linkage. Position 191 is a phosphoserine (serine 191). 9 consecutive C2H2-type zinc fingers follow at residues 207–229, 235–257, 263–285, 291–313, 319–341, 347–369, 375–397, 403–425, and 431–453; these read YECSQCGKNFSQSSELLLHQRDH, YKCEQCGKGFTRSSSLLIHQAVH, YKCDKCGKGFTRSSSLLIHHAVH, YKCDKCGKGFSQSSKLHIHQRVH, YECEECGMSFSQRSNLHIHQRVH, YKCGECGKGFSQSSNLHIHRCIH, YQCYECGKGFSQSPDLRIHLRVH, YHCGKCGKGFSQSSKLLIHQRVH, and YECSKCGKGFSQSSNLHIHQRVH.

The protein belongs to the krueppel C2H2-type zinc-finger protein family.

The protein resides in the nucleus. May be involved in transcriptional regulation. The chain is Zinc finger protein 239 (ZNF239) from Pongo abelii (Sumatran orangutan).